The primary structure comprises 70 residues: MEDMWGKIGETAGKIYHLLEGGEKSLSQIEKILRKEGYNSNIVKMAIGWLAREDKIFVLKDDKKWVIKLK.

This is an uncharacterized protein from Methanocaldococcus jannaschii (strain ATCC 43067 / DSM 2661 / JAL-1 / JCM 10045 / NBRC 100440) (Methanococcus jannaschii).